A 393-amino-acid polypeptide reads, in one-letter code: S-adenosylmethionine synthase 2 (393 aa).

Residue Glu9 participates in Mg(2+) binding. Position 15 (His15) interacts with ATP. Glu43 contacts K(+). L-methionine contacts are provided by Glu56 and Gln99. Residues 167–169, 235–238, Asp246, 252–253, Ala269, Lys273, and Lys277 each bind ATP; these read DGK, SGRF, and RK. Asp246 lines the L-methionine pocket. Lys277 contacts L-methionine.

Belongs to the AdoMet synthase family. Homotetramer. Requires Mn(2+) as cofactor. It depends on Mg(2+) as a cofactor. Co(2+) serves as cofactor. The cofactor is K(+).

The protein resides in the cytoplasm. The enzyme catalyses L-methionine + ATP + H2O = S-adenosyl-L-methionine + phosphate + diphosphate. The protein operates within amino-acid biosynthesis; S-adenosyl-L-methionine biosynthesis; S-adenosyl-L-methionine from L-methionine: step 1/1. Its function is as follows. Catalyzes the formation of S-adenosylmethionine from methionine and ATP. The reaction comprises two steps that are both catalyzed by the same enzyme: formation of S-adenosylmethionine (AdoMet) and triphosphate, and subsequent hydrolysis of the triphosphate. May be involved in the synthesis of betain in response to abiotic stress such as high salinity. The protein is S-adenosylmethionine synthase 2 (SAMS2) of Beta vulgaris (Sugar beet).